Here is a 513-residue protein sequence, read N- to C-terminus: GMP synthase [glutamine-hydrolyzing] (513 aa).

In terms of domain architecture, Glutamine amidotransferase type-1 spans 8-198 (MILVLDFGSQ…VFGVCECVGE (191 aa)). The Nucleophile role is filled by cysteine 85. Active-site residues include histidine 172 and glutamate 174. A GMPS ATP-PPase domain is found at 199–388 (WSMENFIEIE…LGIPDEIVWR (190 aa)). Residue 226 to 232 (SGGVDSS) coordinates ATP.

Homodimer.

The enzyme catalyses XMP + L-glutamine + ATP + H2O = GMP + L-glutamate + AMP + diphosphate + 2 H(+). It functions in the pathway purine metabolism; GMP biosynthesis; GMP from XMP (L-Gln route): step 1/1. Functionally, catalyzes the synthesis of GMP from XMP. In Bacillus licheniformis (strain ATCC 14580 / DSM 13 / JCM 2505 / CCUG 7422 / NBRC 12200 / NCIMB 9375 / NCTC 10341 / NRRL NRS-1264 / Gibson 46), this protein is GMP synthase [glutamine-hydrolyzing].